The chain runs to 272 residues: HMP-PP phosphatase (272 aa).

The active-site Nucleophile is the Asp8. Residues Asp8, Asp10, and Asp212 each contribute to the Mg(2+) site.

This sequence belongs to the HAD-like hydrolase superfamily. Cof family. Mg(2+) is required as a cofactor.

It catalyses the reaction 4-amino-2-methyl-5-(diphosphooxymethyl)pyrimidine + H2O = 4-amino-2-methyl-5-(phosphooxymethyl)pyrimidine + phosphate + H(+). In terms of biological role, catalyzes the hydrolysis of 4-amino-2-methyl-5-hydroxymethylpyrimidine pyrophosphate (HMP-PP) to 4-amino-2-methyl-5-hydroxymethylpyrimidine phosphate (HMP-P). The polypeptide is HMP-PP phosphatase (Shigella flexneri serotype 5b (strain 8401)).